The primary structure comprises 450 residues: Glutathione reductase (450 aa).

Positions 14, 15, 34, 41, 42, 50, and 115 each coordinate FAD. Ser14 is a glutathione binding site. A disulfide bridge connects residues Cys42 and Cys47. NADP(+) contacts are provided by Ala175, Ile178, Glu181, Arg198, Arg204, and Gly262. Asp303 contributes to the FAD binding site. NADP(+) is bound at residue Asp309. Position 311 (Thr311) interacts with FAD. Arg319 lines the glutathione pocket. Val342 provides a ligand contact to NADP(+). His439 lines the FAD pocket. The Proton acceptor role is filled by His439.

This sequence belongs to the class-I pyridine nucleotide-disulfide oxidoreductase family. As to quaternary structure, homodimer. It depends on FAD as a cofactor.

Its subcellular location is the cytoplasm. The catalysed reaction is 2 glutathione + NADP(+) = glutathione disulfide + NADPH + H(+). In terms of biological role, catalyzes the reduction of glutathione disulfide (GSSG) to reduced glutathione (GSH). Constitutes the major mechanism to maintain a high GSH:GSSG ratio in the cytosol. In Streptococcus thermophilus, this protein is Glutathione reductase (gor).